Consider the following 275-residue polypeptide: MTNQGAIPVIVNGAAGKMGREVVKAVAQAADLTLFGAVDRNPSLQGQDIGEVVGIGPLEVPLLADLQSLLVAAAQEPQAGVMVDFTHPNSVYDNVRMAIAYGVRPVVGTTGLSPEQIRDLATFADKASMGCLIIPNFSIGMVLLQQAAIQASQYFDHVEIIELHHNQKADAPSGTALQTAQLLAELGKTYNPPAVKETEHLAGARGSLAEEGIRIHSVRLPGLIAHQEVIFGAPGQVYTLRHDTSDRSCYMPGVLLAIRKVMNLETVVYGLEKIL.

Residues 13-18 and 108-110 contribute to the NAD(+) site; these read GAAGKM and GTT. Catalysis depends on histidine 164, which acts as the Proton donor/acceptor. Histidine 165 contributes to the (S)-2,3,4,5-tetrahydrodipicolinate binding site. Lysine 168 acts as the Proton donor in catalysis. Residue 174–175 participates in (S)-2,3,4,5-tetrahydrodipicolinate binding; sequence GT.

It belongs to the DapB family.

The protein resides in the cytoplasm. The catalysed reaction is (S)-2,3,4,5-tetrahydrodipicolinate + NAD(+) + H2O = (2S,4S)-4-hydroxy-2,3,4,5-tetrahydrodipicolinate + NADH + H(+). It catalyses the reaction (S)-2,3,4,5-tetrahydrodipicolinate + NADP(+) + H2O = (2S,4S)-4-hydroxy-2,3,4,5-tetrahydrodipicolinate + NADPH + H(+). The protein operates within amino-acid biosynthesis; L-lysine biosynthesis via DAP pathway; (S)-tetrahydrodipicolinate from L-aspartate: step 4/4. Catalyzes the conversion of 4-hydroxy-tetrahydrodipicolinate (HTPA) to tetrahydrodipicolinate. The protein is 4-hydroxy-tetrahydrodipicolinate reductase of Cyanothece sp. (strain PCC 7425 / ATCC 29141).